Here is a 312-residue protein sequence, read N- to C-terminus: Ribosomal protein L11 methyltransferase (312 aa).

S-adenosyl-L-methionine contacts are provided by Thr-160, Gly-181, Asp-203, and Asn-246.

This sequence belongs to the methyltransferase superfamily. PrmA family.

It is found in the cytoplasm. It carries out the reaction L-lysyl-[protein] + 3 S-adenosyl-L-methionine = N(6),N(6),N(6)-trimethyl-L-lysyl-[protein] + 3 S-adenosyl-L-homocysteine + 3 H(+). In terms of biological role, methylates ribosomal protein L11. This Staphylococcus haemolyticus (strain JCSC1435) protein is Ribosomal protein L11 methyltransferase.